We begin with the raw amino-acid sequence, 92 residues long: Small ribosomal subunit protein bS16 (92 aa).

Belongs to the bacterial ribosomal protein bS16 family.

The polypeptide is Small ribosomal subunit protein bS16 (Desulforudis audaxviator (strain MP104C)).